The chain runs to 411 residues: Serine--tRNA ligase (411 aa).

L-serine is bound at residue 226–228 (TSE). 257-259 (RKE) serves as a coordination point for ATP. Glu-280 contributes to the L-serine binding site. 344–347 (EISS) provides a ligand contact to ATP. Ser-379 provides a ligand contact to L-serine.

This sequence belongs to the class-II aminoacyl-tRNA synthetase family. Type-1 seryl-tRNA synthetase subfamily. In terms of assembly, homodimer. The tRNA molecule binds across the dimer.

It is found in the cytoplasm. The enzyme catalyses tRNA(Ser) + L-serine + ATP = L-seryl-tRNA(Ser) + AMP + diphosphate + H(+). It catalyses the reaction tRNA(Sec) + L-serine + ATP = L-seryl-tRNA(Sec) + AMP + diphosphate + H(+). The protein operates within aminoacyl-tRNA biosynthesis; selenocysteinyl-tRNA(Sec) biosynthesis; L-seryl-tRNA(Sec) from L-serine and tRNA(Sec): step 1/1. Catalyzes the attachment of serine to tRNA(Ser). Is also able to aminoacylate tRNA(Sec) with serine, to form the misacylated tRNA L-seryl-tRNA(Sec), which will be further converted into selenocysteinyl-tRNA(Sec). This chain is Serine--tRNA ligase, found in Campylobacter jejuni subsp. jejuni serotype O:6 (strain 81116 / NCTC 11828).